The primary structure comprises 401 residues: Argininosuccinate synthase (401 aa).

8–16 (AYSGGLDTS) contacts ATP. Residue tyrosine 85 coordinates L-citrulline. An ATP-binding site is contributed by glycine 115. Residues threonine 117, asparagine 121, and aspartate 122 each contribute to the L-aspartate site. Asparagine 121 contacts L-citrulline. The L-citrulline site is built by arginine 125, serine 173, glutamate 258, and tyrosine 270.

The protein belongs to the argininosuccinate synthase family. Type 1 subfamily. Homotetramer.

Its subcellular location is the cytoplasm. It carries out the reaction L-citrulline + L-aspartate + ATP = 2-(N(omega)-L-arginino)succinate + AMP + diphosphate + H(+). Its pathway is amino-acid biosynthesis; L-arginine biosynthesis; L-arginine from L-ornithine and carbamoyl phosphate: step 2/3. The polypeptide is Argininosuccinate synthase (Staphylococcus carnosus (strain TM300)).